A 1072-amino-acid chain; its full sequence is Carbamoyl phosphate synthase large chain (1072 aa).

The carboxyphosphate synthetic domain stretch occupies residues 1–401; that stretch reads MPKRLDINTI…SLLKAVRSLE (401 aa). 12 residues coordinate ATP: Arg-129, Arg-169, Gly-175, Gly-176, Lys-208, Ile-210, Glu-215, Gly-241, Val-242, His-243, Gln-284, and Glu-298. The 195-residue stretch at 133–327 folds into the ATP-grasp 1 domain; that stretch reads RTLMQELNEP…IAKLAAKIAV (195 aa). Positions 284, 298, and 300 each coordinate Mg(2+). 3 residues coordinate Mn(2+): Gln-284, Glu-298, and Asn-300. The tract at residues 402–546 is oligomerization domain; sequence LGIYHLELDH…YSTYADENEL (145 aa). The carbamoyl phosphate synthetic domain stretch occupies residues 547–929; the sequence is IVTDRKSVVV…ALYKGLVASG (383 aa). One can recognise an ATP-grasp 2 domain in the interval 671–861; the sequence is EAALTKLGIP…MANVATKVIL (191 aa). Arg-707, Arg-746, Glu-752, Gly-777, Val-778, His-779, Ser-780, Gln-820, and Glu-832 together coordinate ATP. Gln-820, Glu-832, and Asn-834 together coordinate Mg(2+). Residues Gln-820, Glu-832, and Asn-834 each coordinate Mn(2+). The region spanning 930 to 1072 is the MGS-like domain; sequence INIPTHGSVI…QTKRHEVVHA (143 aa). Residues 930 to 1072 form an allosteric domain region; that stretch reads INIPTHGSVI…QTKRHEVVHA (143 aa).

The protein belongs to the CarB family. Composed of two chains; the small (or glutamine) chain promotes the hydrolysis of glutamine to ammonia, which is used by the large (or ammonia) chain to synthesize carbamoyl phosphate. Tetramer of heterodimers (alpha,beta)4. Requires Mg(2+) as cofactor. The cofactor is Mn(2+).

It catalyses the reaction hydrogencarbonate + L-glutamine + 2 ATP + H2O = carbamoyl phosphate + L-glutamate + 2 ADP + phosphate + 2 H(+). The catalysed reaction is hydrogencarbonate + NH4(+) + 2 ATP = carbamoyl phosphate + 2 ADP + phosphate + 2 H(+). The protein operates within amino-acid biosynthesis; L-arginine biosynthesis; carbamoyl phosphate from bicarbonate: step 1/1. It functions in the pathway pyrimidine metabolism; UMP biosynthesis via de novo pathway; (S)-dihydroorotate from bicarbonate: step 1/3. In terms of biological role, large subunit of the glutamine-dependent carbamoyl phosphate synthetase (CPSase). CPSase catalyzes the formation of carbamoyl phosphate from the ammonia moiety of glutamine, carbonate, and phosphate donated by ATP, constituting the first step of 2 biosynthetic pathways, one leading to arginine and/or urea and the other to pyrimidine nucleotides. The large subunit (synthetase) binds the substrates ammonia (free or transferred from glutamine from the small subunit), hydrogencarbonate and ATP and carries out an ATP-coupled ligase reaction, activating hydrogencarbonate by forming carboxy phosphate which reacts with ammonia to form carbamoyl phosphate. The polypeptide is Carbamoyl phosphate synthase large chain (Bacillus anthracis (strain A0248)).